Here is a 338-residue protein sequence, read N- to C-terminus: 1-aminocyclopropane-1-carboxylate deaminase (338 aa).

Lys-51 is modified (N6-(pyridoxal phosphate)lysine). The active-site Nucleophile is Ser-78.

Belongs to the ACC deaminase/D-cysteine desulfhydrase family. In terms of assembly, homotrimer. Pyridoxal 5'-phosphate serves as cofactor.

The enzyme catalyses 1-aminocyclopropane-1-carboxylate + H2O = 2-oxobutanoate + NH4(+). Functionally, catalyzes a cyclopropane ring-opening reaction, the irreversible conversion of 1-aminocyclopropane-1-carboxylate (ACC) to ammonia and alpha-ketobutyrate. Allows growth on ACC as a nitrogen source. The chain is 1-aminocyclopropane-1-carboxylate deaminase from Paraburkholderia xenovorans (strain LB400).